A 353-amino-acid chain; its full sequence is Holliday junction branch migration complex subunit RuvB (353 aa).

A large ATPase domain (RuvB-L) region spans residues 1–183 (MNEPRIVAPQ…FGATYRLDFY (183 aa)). ATP contacts are provided by residues Leu-22, Arg-23, Gly-64, Lys-67, Thr-68, Thr-69, 130-132 (EDF), Arg-173, Tyr-183, and Arg-220. Thr-68 provides a ligand contact to Mg(2+). Positions 184–254 (DTAALRAIVE…LARLALDQLA (71 aa)) are small ATPAse domain (RuvB-S). The interval 257–353 (ELGLDEVDRL…HAASERSSDA (97 aa)) is head domain (RuvB-H). DNA contacts are provided by Arg-312 and Arg-317.

The protein belongs to the RuvB family. As to quaternary structure, homohexamer. Forms an RuvA(8)-RuvB(12)-Holliday junction (HJ) complex. HJ DNA is sandwiched between 2 RuvA tetramers; dsDNA enters through RuvA and exits via RuvB. An RuvB hexamer assembles on each DNA strand where it exits the tetramer. Each RuvB hexamer is contacted by two RuvA subunits (via domain III) on 2 adjacent RuvB subunits; this complex drives branch migration. In the full resolvosome a probable DNA-RuvA(4)-RuvB(12)-RuvC(2) complex forms which resolves the HJ.

Its subcellular location is the cytoplasm. The catalysed reaction is ATP + H2O = ADP + phosphate + H(+). In terms of biological role, the RuvA-RuvB-RuvC complex processes Holliday junction (HJ) DNA during genetic recombination and DNA repair, while the RuvA-RuvB complex plays an important role in the rescue of blocked DNA replication forks via replication fork reversal (RFR). RuvA specifically binds to HJ cruciform DNA, conferring on it an open structure. The RuvB hexamer acts as an ATP-dependent pump, pulling dsDNA into and through the RuvAB complex. RuvB forms 2 homohexamers on either side of HJ DNA bound by 1 or 2 RuvA tetramers; 4 subunits per hexamer contact DNA at a time. Coordinated motions by a converter formed by DNA-disengaged RuvB subunits stimulates ATP hydrolysis and nucleotide exchange. Immobilization of the converter enables RuvB to convert the ATP-contained energy into a lever motion, pulling 2 nucleotides of DNA out of the RuvA tetramer per ATP hydrolyzed, thus driving DNA branch migration. The RuvB motors rotate together with the DNA substrate, which together with the progressing nucleotide cycle form the mechanistic basis for DNA recombination by continuous HJ branch migration. Branch migration allows RuvC to scan DNA until it finds its consensus sequence, where it cleaves and resolves cruciform DNA. The protein is Holliday junction branch migration complex subunit RuvB of Thermomicrobium roseum (strain ATCC 27502 / DSM 5159 / P-2).